A 141-amino-acid polypeptide reads, in one-letter code: MLDILEIMKRIPHRYPFLLVDRILEMDKEAQIIKGKKNVTMNEEFFNGHFPGHPIMPGVLIIEGMAQCLGVMVMENFPGKVPYFAAIENAKFKNPVKPGDTLIYDVKVDKVKRNFVKATGKTYVDDAVVAEASFTFVIADM.

Residue histidine 49 is part of the active site.

The protein belongs to the thioester dehydratase family. FabZ subfamily.

It is found in the cytoplasm. The enzyme catalyses a (3R)-hydroxyacyl-[ACP] = a (2E)-enoyl-[ACP] + H2O. Functionally, involved in unsaturated fatty acids biosynthesis. Catalyzes the dehydration of short chain beta-hydroxyacyl-ACPs and long chain saturated and unsaturated beta-hydroxyacyl-ACPs. In Fusobacterium nucleatum subsp. nucleatum (strain ATCC 25586 / DSM 15643 / BCRC 10681 / CIP 101130 / JCM 8532 / KCTC 2640 / LMG 13131 / VPI 4355), this protein is 3-hydroxyacyl-[acyl-carrier-protein] dehydratase FabZ.